The primary structure comprises 204 residues: Thiamine-phosphate synthase (204 aa).

Residues 28-32 and asparagine 60 contribute to the 4-amino-2-methyl-5-(diphosphooxymethyl)pyrimidine site; that span reads QLRIK. Mg(2+) contacts are provided by aspartate 61 and aspartate 80. 4-amino-2-methyl-5-(diphosphooxymethyl)pyrimidine contacts are provided by serine 99 and lysine 128. 2-[(2R,5Z)-2-carboxy-4-methylthiazol-5(2H)-ylidene]ethyl phosphate-binding positions include glycine 157 and 177-178; that span reads VT.

This sequence belongs to the thiamine-phosphate synthase family. Requires Mg(2+) as cofactor.

It catalyses the reaction 2-[(2R,5Z)-2-carboxy-4-methylthiazol-5(2H)-ylidene]ethyl phosphate + 4-amino-2-methyl-5-(diphosphooxymethyl)pyrimidine + 2 H(+) = thiamine phosphate + CO2 + diphosphate. It carries out the reaction 2-(2-carboxy-4-methylthiazol-5-yl)ethyl phosphate + 4-amino-2-methyl-5-(diphosphooxymethyl)pyrimidine + 2 H(+) = thiamine phosphate + CO2 + diphosphate. The enzyme catalyses 4-methyl-5-(2-phosphooxyethyl)-thiazole + 4-amino-2-methyl-5-(diphosphooxymethyl)pyrimidine + H(+) = thiamine phosphate + diphosphate. It participates in cofactor biosynthesis; thiamine diphosphate biosynthesis; thiamine phosphate from 4-amino-2-methyl-5-diphosphomethylpyrimidine and 4-methyl-5-(2-phosphoethyl)-thiazole: step 1/1. In terms of biological role, condenses 4-methyl-5-(beta-hydroxyethyl)thiazole monophosphate (THZ-P) and 2-methyl-4-amino-5-hydroxymethyl pyrimidine pyrophosphate (HMP-PP) to form thiamine monophosphate (TMP). In Rhizobium etli (strain ATCC 51251 / DSM 11541 / JCM 21823 / NBRC 15573 / CFN 42), this protein is Thiamine-phosphate synthase.